The sequence spans 381 residues: Succinyl-diaminopimelate desuccinylase (381 aa).

His-68 serves as a coordination point for Zn(2+). Asp-70 is a catalytic residue. Residue Asp-101 coordinates Zn(2+). The active-site Proton acceptor is the Glu-135. Glu-136, Glu-164, and His-350 together coordinate Zn(2+).

The protein belongs to the peptidase M20A family. DapE subfamily. As to quaternary structure, homodimer. Requires Zn(2+) as cofactor. Co(2+) is required as a cofactor.

It catalyses the reaction N-succinyl-(2S,6S)-2,6-diaminopimelate + H2O = (2S,6S)-2,6-diaminopimelate + succinate. It functions in the pathway amino-acid biosynthesis; L-lysine biosynthesis via DAP pathway; LL-2,6-diaminopimelate from (S)-tetrahydrodipicolinate (succinylase route): step 3/3. In terms of biological role, catalyzes the hydrolysis of N-succinyl-L,L-diaminopimelic acid (SDAP), forming succinate and LL-2,6-diaminopimelate (DAP), an intermediate involved in the bacterial biosynthesis of lysine and meso-diaminopimelic acid, an essential component of bacterial cell walls. This is Succinyl-diaminopimelate desuccinylase from Neisseria gonorrhoeae (strain ATCC 700825 / FA 1090).